We begin with the raw amino-acid sequence, 29 residues long: Brevinin-2Tc (29 aa).

A disulfide bridge connects residues cysteine 23 and cysteine 29.

It belongs to the frog skin active peptide (FSAP) family. Brevinin subfamily. In terms of tissue distribution, expressed by the skin glands.

The protein localises to the secreted. In terms of biological role, antibacterial activity against representative Gram-negative and Gram-positive bacteria. This Rana temporaria (European common frog) protein is Brevinin-2Tc.